A 387-amino-acid polypeptide reads, in one-letter code: Putative ribosomal RNA large subunit methyltransferase MJ1649 (387 aa).

Residues 5–81 (LIKLEIDRRA…EEIDYDFFYK (77 aa)) enclose the PUA domain.

The protein belongs to the methyltransferase superfamily. RlmI family.

The protein localises to the cytoplasm. The polypeptide is Putative ribosomal RNA large subunit methyltransferase MJ1649 (Methanocaldococcus jannaschii (strain ATCC 43067 / DSM 2661 / JAL-1 / JCM 10045 / NBRC 100440) (Methanococcus jannaschii)).